The chain runs to 66 residues: Large ribosomal subunit protein uL29 (66 aa).

This sequence belongs to the universal ribosomal protein uL29 family.

The chain is Large ribosomal subunit protein uL29 from Borrelia hermsii (strain HS1 / DAH).